Here is a 689-residue protein sequence, read N- to C-terminus: MAGVSAVRWLGLRSRLGQPLTGRRAGLCKQARSCRFYSGSATLSKVEGTDITGIEEVVIPKKKTWDKVAVLQALASTVNRDTTSVPYVFQDDPYLIPASSLESRLFLLAKKSGENVAKFIINSYPKYFQKDIAEPHIPCLMPEYFEPQIKDISEAALKERIELRKVKASVDMFDQLLQAGTTVSLETTNSLLDLLCYFGDQEPSTDYHFQQTEQSEALEVENDETSRRKAGHQFGVTWQAKNNAERIFSLMPEKNAHSYCTMIRGMVKHRAYEQALNLYTELLNNRLHADVYTFNALTEATVCVINGKFEEKWSKIQELLRHMVAQKVKPNLQTFNTILKCLRRFHVFARSPALRILREMKAIGIEPSLATYHHIIHVFDQPGDPLKRSSFIIYDIMNELMGKRFSPKDPDDDKFFQSAMSICSSLRDLELAYQVHGLLNTGDNWKFIGPDHHRNFYYSKFFDLICLMEQIDVTLKWYEDLIPSVYFPHSQTLIHLLQALDVANRLEMIPKIWKDSKEYGHTFRSDLREEILKLMARDKHPPELQVAFADCAADIKSAYESQHIRQTAQDWPATSLYCIAILFLRAGRTQEAWNMLELFRKHNKIPRSELLNELMDSAKVSNSPSQAIEVVELASAFSLPICEGLTQRVMSDFAINQEQKEALGNLTALTSDSDTDSSSDSDSDTSEGK.

Residues 1–37 (MAGVSAVRWLGLRSRLGQPLTGRRAGLCKQARSCRFY) constitute a mitochondrion transit peptide. Lys-126 carries the post-translational modification N6-acetyllysine. 10 PPR repeats span residues 149–183 (IKDI…GTTV), 184–219 (SLET…EALE), 255–289 (NAHS…RLHA), 290–330 (DVYT…KVKP), 331–367 (NLQT…GIEP), 368–404 (SLAT…MGKR), 412–446 (DDKF…DNWK), 454–488 (RNFY…VYFP), 489–523 (HSQT…GHTF), and 572–606 (PATS…NKIP). The tract at residues 665–689 (NLTALTSDSDTDSSSDSDSDTSEGK) is disordered. A compositionally biased stretch (acidic residues) spans 673–689 (SDTDSSSDSDSDTSEGK).

Belongs to the mitochondrion-specific ribosomal protein mS39 family. Component of the mitochondrial ribosome small subunit (28S) which comprises a 12S rRNA and about 30 distinct proteins. Associated with the 12S mitochondrial rRNA (12S mt-rRNA).

The protein localises to the mitochondrion. In terms of biological role, mitochondrial RNA-binding protein that has a role in mitochondrial translation. This is Small ribosomal subunit protein mS39 (PTCD3) from Pongo abelii (Sumatran orangutan).